Reading from the N-terminus, the 222-residue chain is Phosphoribosylformylglycinamidine synthase subunit PurQ (222 aa).

Residues arginine 2–glutamine 222 form the Glutamine amidotransferase type-1 domain. The active-site Nucleophile is cysteine 87. Active-site residues include histidine 195 and glutamate 197.

Part of the FGAM synthase complex composed of 1 PurL, 1 PurQ and 2 PurS subunits.

It localises to the cytoplasm. The enzyme catalyses N(2)-formyl-N(1)-(5-phospho-beta-D-ribosyl)glycinamide + L-glutamine + ATP + H2O = 2-formamido-N(1)-(5-O-phospho-beta-D-ribosyl)acetamidine + L-glutamate + ADP + phosphate + H(+). It carries out the reaction L-glutamine + H2O = L-glutamate + NH4(+). It participates in purine metabolism; IMP biosynthesis via de novo pathway; 5-amino-1-(5-phospho-D-ribosyl)imidazole from N(2)-formyl-N(1)-(5-phospho-D-ribosyl)glycinamide: step 1/2. Part of the phosphoribosylformylglycinamidine synthase complex involved in the purines biosynthetic pathway. Catalyzes the ATP-dependent conversion of formylglycinamide ribonucleotide (FGAR) and glutamine to yield formylglycinamidine ribonucleotide (FGAM) and glutamate. The FGAM synthase complex is composed of three subunits. PurQ produces an ammonia molecule by converting glutamine to glutamate. PurL transfers the ammonia molecule to FGAR to form FGAM in an ATP-dependent manner. PurS interacts with PurQ and PurL and is thought to assist in the transfer of the ammonia molecule from PurQ to PurL. The polypeptide is Phosphoribosylformylglycinamidine synthase subunit PurQ (Deinococcus geothermalis (strain DSM 11300 / CIP 105573 / AG-3a)).